The following is a 63-amino-acid chain: Hyphancin-3E (63 aa).

A signal peptide spans 1–22; sequence MNFSRILFFVFTCFVALASVSG. The propeptide at 23–26 is removed by a dipeptidylpeptidase; that stretch reads APEP. At leucine 61 the chain carries Leucine amide.

It belongs to the cecropin family.

Its subcellular location is the secreted. In terms of biological role, has antibacterial activity. The chain is Hyphancin-3E from Hyphantria cunea (Fall webworm moth).